A 493-amino-acid polypeptide reads, in one-letter code: GTPase Der (493 aa).

An EngA-type G 1 domain is found at 3 to 166 (PVIALVGRPN…EALGIFPKDN (164 aa)). GTP contacts are provided by residues 9 to 16 (GRPNVGKS), 56 to 60 (DTGGI), and 118 to 121 (NKVD). The interval 166–195 (NAEEEGEGEPASEEVAEGEEPTRIPGPSEK) is disordered. Residues 167 to 184 (AEEEGEGEPASEEVAEGE) show a composition bias toward acidic residues. In terms of domain architecture, EngA-type G 2 spans 198–371 (IKIAIIGRPN…SVQESFRSAV (174 aa)). Residues 204 to 211 (GRPNVGKS), 251 to 255 (DTAGV), and 316 to 319 (NKWD) contribute to the GTP site. The KH-like domain occupies 372–456 (TRWPTSRLTS…PIRIEYKGGE (85 aa)). Residues 454–463 (GGENPYEGKK) show a composition bias toward basic and acidic residues. The segment at 454–493 (GGENPYEGKKNSLTARQVNKKRRLMSHHKKAEKKKKDKRR) is disordered. Over residues 471 to 493 (VNKKRRLMSHHKKAEKKKKDKRR) the composition is skewed to basic residues.

Belongs to the TRAFAC class TrmE-Era-EngA-EngB-Septin-like GTPase superfamily. EngA (Der) GTPase family. Associates with the 50S ribosomal subunit.

In terms of biological role, GTPase that plays an essential role in the late steps of ribosome biogenesis. This chain is GTPase Der, found in Pseudomonas aeruginosa (strain UCBPP-PA14).